A 349-amino-acid chain; its full sequence is tRNA pseudouridine synthase D (349 aa).

Substrate is bound at residue Phe27. The active-site Nucleophile is the Asp80. Asn129 is a binding site for substrate. The region spanning 155–303 is the TRUD domain; sequence GVPNYFGAQR…VEAARRAMLL (149 aa). Residue Phe329 coordinates substrate.

It belongs to the pseudouridine synthase TruD family.

The enzyme catalyses uridine(13) in tRNA = pseudouridine(13) in tRNA. Responsible for synthesis of pseudouridine from uracil-13 in transfer RNAs. This Escherichia coli O8 (strain IAI1) protein is tRNA pseudouridine synthase D.